Consider the following 351-residue polypeptide: Nicotinate-nucleotide--dimethylbenzimidazole phosphoribosyltransferase (351 aa).

The active-site Proton acceptor is Glu-317.

It belongs to the CobT family.

It carries out the reaction 5,6-dimethylbenzimidazole + nicotinate beta-D-ribonucleotide = alpha-ribazole 5'-phosphate + nicotinate + H(+). The protein operates within nucleoside biosynthesis; alpha-ribazole biosynthesis; alpha-ribazole from 5,6-dimethylbenzimidazole: step 1/2. In terms of biological role, catalyzes the synthesis of alpha-ribazole-5'-phosphate from nicotinate mononucleotide (NAMN) and 5,6-dimethylbenzimidazole (DMB). The polypeptide is Nicotinate-nucleotide--dimethylbenzimidazole phosphoribosyltransferase (Ectopseudomonas mendocina (strain ymp) (Pseudomonas mendocina)).